The sequence spans 176 residues: Natural cytotoxicity triggering receptor 3 (176 aa).

A signal peptide spans 1 to 18 (MAWMLLLILIMVYPGSCA). Residues 19–126 (LWVSQPPEIR…VGTGNGTRLV (108 aa)) form the Ig-like domain. At 19-135 (LWVSQPPEIR…VVEKEYPQLG (117 aa)) the chain is on the extracellular side. A disulfide bond links cysteine 39 and cysteine 108. N-linked (GlcNAc...) asparagine glycans are attached at residues asparagine 42 and asparagine 121. Residues 136–156 (AGTVLLLRAGFYAVSFLSVAV) traverse the membrane as a helical segment. At 157 to 176 (GSTLYYQGKCHCHMGTHCHS) the chain is on the cytoplasmic side.

The protein belongs to the natural cytotoxicity receptor (NCR) family. Homodimer in the unliganted form. Interacts with CD3Z. Interacts with and is activated by binding to NCR3LG1. Interacts with and is activated by binding to BAG6. Interacts with and is inhibited by binding to LGALS3.

The protein resides in the cell membrane. In terms of biological role, cell membrane receptor of natural killer/NK cells that is activated by binding of extracellular ligands including BAG6 and NCR3LG1. Stimulates NK cells cytotoxicity toward neighboring cells producing these ligands. It controls, for instance, NK cells cytotoxicity against tumor cells. Engagement of NCR3 by BAG6 also promotes myeloid dendritic cells (DC) maturation, both through killing DCs that did not acquire a mature phenotype, and inducing the release by NK cells of TNFA and IFNG that promote DC maturation. In Macaca fascicularis (Crab-eating macaque), this protein is Natural cytotoxicity triggering receptor 3 (NCR3).